Here is a 142-residue protein sequence, read N- to C-terminus: ATP synthase epsilon chain (142 aa).

It belongs to the ATPase epsilon chain family. As to quaternary structure, F-type ATPases have 2 components, CF(1) - the catalytic core - and CF(0) - the membrane proton channel. CF(1) has five subunits: alpha(3), beta(3), gamma(1), delta(1), epsilon(1). CF(0) has three main subunits: a, b and c.

Its subcellular location is the cell inner membrane. Its function is as follows. Produces ATP from ADP in the presence of a proton gradient across the membrane. The polypeptide is ATP synthase epsilon chain (Haemophilus influenzae (strain 86-028NP)).